A 137-amino-acid polypeptide reads, in one-letter code: Hydrogenase maturation factor HypA (137 aa).

Position 2 (histidine 2) interacts with Ni(2+). Residues cysteine 73, cysteine 75, cysteine 105, and cysteine 108 each contribute to the Zn(2+) site.

This sequence belongs to the HypA/HybF family.

Its function is as follows. Involved in the maturation of [NiFe] hydrogenases. Required for nickel insertion into the metal center of the hydrogenase. The sequence is that of Hydrogenase maturation factor HypA from Methanosarcina mazei (strain ATCC BAA-159 / DSM 3647 / Goe1 / Go1 / JCM 11833 / OCM 88) (Methanosarcina frisia).